A 91-amino-acid chain; its full sequence is MKLSNVFLAAVVILTCVCVFQITAVPFIQQVQDEHHVESEELQENQHLTEAEHRLTDPLVLFRTKRQSHLSLCRFCCKCCRNKGCGYCCKF.

The first 24 residues, 1 to 24 (MKLSNVFLAAVVILTCVCVFQITA), serve as a signal peptide directing secretion. The propeptide occupies 25 to 64 (VPFIQQVQDEHHVESEELQENQHLTEAEHRLTDPLVLFRT). 4 disulfides stabilise this stretch: C73–C89, C76–C79, C77–C85, and C80–C88.

This sequence belongs to the hepcidin family.

Its subcellular location is the secreted. Seems to act as a signaling molecule involved in the maintenance of iron homeostasis. Seems to be required in conjunction with HFE to regulate both intestinal iron absorption and iron storage in macrophages. May also have antimicrobial activity. The chain is Hepcidin-2 (hamp2) from Danio rerio (Zebrafish).